Here is an 83-residue protein sequence, read N- to C-terminus: Three-finger toxin W-IV (83 aa).

The N-terminal stretch at 1-21 (MKTLLLTLVVVTIVCLDLGHT) is a signal peptide. 4 disulfides stabilise this stretch: cysteine 24–cysteine 45, cysteine 38–cysteine 62, cysteine 64–cysteine 75, and cysteine 76–cysteine 81.

It belongs to the three-finger toxin family. Short-chain subfamily. Type I alpha-neurotoxin sub-subfamily. In terms of tissue distribution, expressed by the venom gland.

It is found in the secreted. Binds to muscle nicotinic acetylcholine receptor (nAChR) and inhibit acetylcholine from binding to the receptor, thereby impairing neuromuscular transmission. The sequence is that of Three-finger toxin W-IV from Walterinnesia aegyptia (Desert black snake).